The chain runs to 1488 residues: Chromosome partition protein MukB (1488 aa).

34–41 provides a ligand contact to ATP; that stretch reads GGNGAGKS. 3 coiled-coil regions span residues 326 to 418, 444 to 472, and 509 to 602; these read LEAD…QYNQ, LDTFQAKEQEATEKLLSLEQKMSVAQTAH, and RHLA…QRAP. The tract at residues 666–783 is flexible hinge; that stretch reads PGGAEDQRLN…SLPIFGRAAR (118 aa). 3 coiled-coil regions span residues 835–923, 977–1116, and 1209–1265; these read EAEI…AKLE, EMLS…AKAG, and VEAI…LQSV. The tract at residues 1049–1074 is disordered; it reads ADSGAEERARQRRDELHAQLSNNRSR. The span at 1051-1065 shows a compositional bias: basic and acidic residues; sequence SGAEERARQRRDELH.

Belongs to the SMC family. MukB subfamily. As to quaternary structure, homodimerization via its hinge domain. Binds to DNA via its C-terminal region. Interacts, and probably forms a ternary complex, with MukE and MukF via its C-terminal region. The complex formation is stimulated by calcium or magnesium. Interacts with tubulin-related protein FtsZ.

It is found in the cytoplasm. It localises to the nucleoid. Plays a central role in chromosome condensation, segregation and cell cycle progression. Functions as a homodimer, which is essential for chromosome partition. Involved in negative DNA supercoiling in vivo, and by this means organize and compact chromosomes. May achieve or facilitate chromosome segregation by condensation DNA from both sides of a centrally located replisome during cell division. This is Chromosome partition protein MukB from Salmonella enteritidis PT4 (strain P125109).